Here is a 72-residue protein sequence, read N- to C-terminus: uncharacterized protein (72 aa).

This is an uncharacterized protein from Haemophilus influenzae (strain ATCC 51907 / DSM 11121 / KW20 / Rd).